Reading from the N-terminus, the 501-residue chain is Aminoaldehyde dehydrogenase ALDH10A8, chloroplastic (501 aa).

Na(+) is bound by residues D99 and L189. NAD(+) is bound by residues 238 to 243 (GSFATG) and 238 to 245 (GSFATGSK). Residue E260 is the Proton acceptor of the active site. Residues C294 and E393 each contribute to the NAD(+) site. C294 serves as the catalytic Nucleophile.

Belongs to the aldehyde dehydrogenase family. As to quaternary structure, homodimer. Widely expressed.

Its subcellular location is the cytoplasm. It is found in the plastid. The protein localises to the chloroplast. The catalysed reaction is 4-aminobutanal + NAD(+) + H2O = 4-aminobutanoate + NADH + 2 H(+). The enzyme catalyses 3-aminopropanal + NAD(+) + H2O = beta-alanine + NADH + 2 H(+). It carries out the reaction 4-(trimethylamino)butanal + NAD(+) + H2O = 4-(trimethylamino)butanoate + NADH + 2 H(+). It catalyses the reaction 4-guanidinobutanal + NAD(+) + H2O = 4-guanidinobutanoate + NADH + 2 H(+). The catalysed reaction is betaine aldehyde + NAD(+) + H2O = glycine betaine + NADH + 2 H(+). Its pathway is amine and polyamine biosynthesis; betaine biosynthesis via choline pathway; betaine from betaine aldehyde: step 1/1. Functionally, dehydrogenase that catalyzes the oxidation of several aminoaldehydes. Metabolizes and detoxifies aldehyde products of polyamine degradation to non-toxic amino acids. Catalyzes the oxidation of 4-aminobutanal and 3-aminopropanal to 4-aminobutanoate and beta-alanine, respectively. Production of 4-aminobutinoate by ALDH10A8 may confer tolerance to salt stress. Catalyzes the oxidation of 4-(trimethylamino)butanal and 4-guanidinobutanal to 4-trimethylammoniobutanoate and 4-guanidinobutanoate, respectively. Involved in glycine betaine biosynthesis. Catalyzes with low efficiency the oxidation of betaine aldehyde to glycine betaine. The sequence is that of Aminoaldehyde dehydrogenase ALDH10A8, chloroplastic from Arabidopsis thaliana (Mouse-ear cress).